A 257-amino-acid polypeptide reads, in one-letter code: Capsid protein (257 aa).

This sequence belongs to the geminiviridae capsid protein family.

The protein resides in the virion. Encapsidates the viral DNA into characteristic twinned ('geminate') particles. Plays a role in protection of the genome from degradation, virus acquisition and transmission by insect vectors, infectivity, and systemic movement. The polypeptide is Capsid protein (Capsicum annuum (Capsicum pepper)).